The primary structure comprises 288 residues: Diaminopimelate epimerase (288 aa).

Residues Asn17, Gln47, and Asn67 each contribute to the substrate site. Cys76 acts as the Proton donor in catalysis. Substrate-binding positions include 77-78, Asn164, Asn197, and 215-216; these read GN and ER. Cys224 functions as the Proton acceptor in the catalytic mechanism. 225–226 contacts substrate; it reads GS.

The protein belongs to the diaminopimelate epimerase family. In terms of assembly, homodimer.

The protein localises to the cytoplasm. The catalysed reaction is (2S,6S)-2,6-diaminopimelate = meso-2,6-diaminopimelate. It functions in the pathway amino-acid biosynthesis; L-lysine biosynthesis via DAP pathway; DL-2,6-diaminopimelate from LL-2,6-diaminopimelate: step 1/1. Catalyzes the stereoinversion of LL-2,6-diaminopimelate (L,L-DAP) to meso-diaminopimelate (meso-DAP), a precursor of L-lysine and an essential component of the bacterial peptidoglycan. In Rhodopseudomonas palustris (strain BisA53), this protein is Diaminopimelate epimerase.